We begin with the raw amino-acid sequence, 266 residues long: 2-C-methyl-D-erythritol 4-phosphate cytidylyltransferase (266 aa).

Over residues Ala-234–Glu-251 the composition is skewed to basic and acidic residues. The disordered stretch occupies residues Ala-234–Gly-266.

It belongs to the IspD/TarI cytidylyltransferase family. IspD subfamily.

The catalysed reaction is 2-C-methyl-D-erythritol 4-phosphate + CTP + H(+) = 4-CDP-2-C-methyl-D-erythritol + diphosphate. It participates in isoprenoid biosynthesis; isopentenyl diphosphate biosynthesis via DXP pathway; isopentenyl diphosphate from 1-deoxy-D-xylulose 5-phosphate: step 2/6. Catalyzes the formation of 4-diphosphocytidyl-2-C-methyl-D-erythritol from CTP and 2-C-methyl-D-erythritol 4-phosphate (MEP). The protein is 2-C-methyl-D-erythritol 4-phosphate cytidylyltransferase of Frankia casuarinae (strain DSM 45818 / CECT 9043 / HFP020203 / CcI3).